Here is a 92-residue protein sequence, read N- to C-terminus: uncharacterized protein (92 aa).

The helical transmembrane segment at 65 to 86 threads the bilayer; it reads AVWIFWLCFLVSGLSRAFLVYF.

The protein resides in the membrane. This is an uncharacterized protein from Treponema pallidum (strain Nichols).